Reading from the N-terminus, the 496-residue chain is Cytochrome P450 monooxygenase cle4 (496 aa).

Residues 12–34 (FFTSPFPLTVGILSISLSGVLWY) form a helical membrane-spanning segment. Residue Cys435 coordinates heme.

This sequence belongs to the cytochrome P450 family. Heme is required as a cofactor.

The protein resides in the membrane. The protein operates within secondary metabolite biosynthesis; terpenoid biosynthesis. Cytochrome P450 monooxygenase; part of the cluster A that mediates the biosynthesis of chevalone E and its oxidized derivatives that possess a unique five-membered lactone ring and can synergistically enhance the cytotoxicity of doxorubicin (DOX) in breast cancer cells. Within the pathway, cle4 is involved in hydroxylation of the chavalone E scaffold at positions C-11 and C-12 and contributes with cle2 to the production of seven oxidation derivatives. The molecular scaffold is commonly biosynthesized by a series of enzymes including the non-reducing polyketide synthase (NR-PKS) cle1 that produces the alpha-pyrone triacetic acid lactone (TAL); The membrane-bound prenyltransferase cle5 that accepts TAL as its substrate to perform a C-3 geranylgeranylation reaction, in which the pathway-dedicated GGPS cle6 is required to provide GGPP, the other substrate of cle5; the FAD-dependent monooxygenase Cle3 that forms an (S)-epoxide ring at the terminal olefin of the geranylgeranyl group; and the terpene cyclase Cle7 that catalyzes the cyclization of the prenyl group that yields the pentacyclic pathway intermediate chevalone E. Chevalone E can derivatize into seven new oxidized analogs by the cytochrome P450 monooxygenases cle2 (acting at C-20) and cle4 (acting at C-11 and C-12). The protein is Cytochrome P450 monooxygenase cle4 of Aspergillus versicolor.